The following is a 61-amino-acid chain: Early 3 Conserved Region 1-alpha protein (61 aa).

Residues 1–14 are Lumenal-facing; that stretch reads MSNSSNSTSLSNFS. 3 N-linked (GlcNAc...) asparagine; by host glycosylation sites follow: Asn3, Asn6, and Asn12. A helical transmembrane segment spans residues 15–35; that stretch reads GIGVGVILTLVILFILILALL. Residues 36 to 61 lie on the Cytoplasmic side of the membrane; that stretch reads CLRVAACCTHVCTYCQLFKRWGQHPR.

The protein belongs to the adenoviridae E3-CR1 family. In terms of assembly, interacts with E3 RID alpha and E3 RID beta. In terms of processing, only 1 of 3 three potential glycosylation sites is glycosylated. Oligosaccharides are not processed from high mannose to the complex type because the protein is retained in the endoplasmic reticulum.

The protein resides in the host endoplasmic reticulum membrane. Its subcellular location is the host cell membrane. In terms of biological role, prevents infected cell apoptosis induced by the host immune system. May act by down-regulating host TRAIL receptors. May act in complex with E3 RID alpha and beta. May play a role on cellular apoptosis regulation in the ER. The sequence is that of Early 3 Conserved Region 1-alpha protein from Human adenovirus C serotype 2 (HAdV-2).